Here is a 149-residue protein sequence, read N- to C-terminus: 1,4-dihydroxy-2-naphthoyl-CoA hydrolase (149 aa).

Asp-19 is an active-site residue.

The protein belongs to the 4-hydroxybenzoyl-CoA thioesterase family. DHNA-CoA hydrolase subfamily.

The enzyme catalyses 1,4-dihydroxy-2-naphthoyl-CoA + H2O = 1,4-dihydroxy-2-naphthoate + CoA + H(+). Its pathway is cofactor biosynthesis; phylloquinone biosynthesis. It functions in the pathway quinol/quinone metabolism; 1,4-dihydroxy-2-naphthoate biosynthesis; 1,4-dihydroxy-2-naphthoate from chorismate: step 7/7. Its function is as follows. Catalyzes the hydrolysis of 1,4-dihydroxy-2-naphthoyl-CoA (DHNA-CoA) to 1,4-dihydroxy-2-naphthoate (DHNA), a reaction involved in phylloquinone (vitamin K1) biosynthesis. The polypeptide is 1,4-dihydroxy-2-naphthoyl-CoA hydrolase (Synechococcus sp. (strain CC9902)).